Consider the following 372-residue polypeptide: Glutamate 5-kinase (372 aa).

Lysine 14 contacts ATP. Residues serine 54, aspartate 141, and asparagine 153 each coordinate substrate. ATP is bound by residues 173–174 (TD) and 215–221 (TGGMATK). In terms of domain architecture, PUA spans 280–358 (RGKLILDQGA…DDIESLLGYD (79 aa)).

This sequence belongs to the glutamate 5-kinase family.

Its subcellular location is the cytoplasm. It carries out the reaction L-glutamate + ATP = L-glutamyl 5-phosphate + ADP. It participates in amino-acid biosynthesis; L-proline biosynthesis; L-glutamate 5-semialdehyde from L-glutamate: step 1/2. Functionally, catalyzes the transfer of a phosphate group to glutamate to form L-glutamate 5-phosphate. This Shewanella sediminis (strain HAW-EB3) protein is Glutamate 5-kinase.